Here is a 122-residue protein sequence, read N- to C-terminus: Large ribosomal subunit protein uL29 (122 aa).

The residue at position 12 (Ser-12) is a Phosphoserine.

This sequence belongs to the universal ribosomal protein uL29 family. As to quaternary structure, component of the large ribosomal subunit (LSU). Mature yeast ribosomes consist of a small (40S) and a large (60S) subunit. The 40S small subunit contains 1 molecule of ribosomal RNA (18S rRNA) and at least 33 different proteins. The large 60S subunit contains 3 rRNA molecules (25S, 5.8S and 5S rRNA) and at least 46 different proteins. uL29 is associated with the polypeptide exit tunnel.

It is found in the cytoplasm. The protein resides in the nucleus. It localises to the nucleolus. Functionally, component of the ribosome, a large ribonucleoprotein complex responsible for the synthesis of proteins in the cell. The small ribosomal subunit (SSU) binds messenger RNAs (mRNAs) and translates the encoded message by selecting cognate aminoacyl-transfer RNA (tRNA) molecules. The large subunit (LSU) contains the ribosomal catalytic site termed the peptidyl transferase center (PTC), which catalyzes the formation of peptide bonds, thereby polymerizing the amino acids delivered by tRNAs into a polypeptide chain. The nascent polypeptides leave the ribosome through a tunnel in the LSU and interact with protein factors that function in enzymatic processing, targeting, and the membrane insertion of nascent chains at the exit of the ribosomal tunnel. This chain is Large ribosomal subunit protein uL29 (rpl35), found in Schizosaccharomyces pombe (strain 972 / ATCC 24843) (Fission yeast).